The sequence spans 365 residues: Tartrate dehydrogenase/decarboxylase (365 aa).

Aspartate 225, aspartate 250, and aspartate 254 together coordinate Mn(2+).

Belongs to the isocitrate and isopropylmalate dehydrogenases family. Homodimer. Requires Mg(2+) as cofactor. Mn(2+) serves as cofactor. The cofactor is K(+).

It localises to the cytoplasm. The enzyme catalyses tartrate + NAD(+) = 2-hydroxy-3-oxosuccinate + NADH + H(+). It carries out the reaction (2R,3S)-tartrate + NAD(+) = 2-hydroxy-3-oxosuccinate + NADH + H(+). It catalyses the reaction (2R,3R)-tartrate + NAD(+) = 2-hydroxy-3-oxosuccinate + NADH + H(+). The catalysed reaction is (2R,3R)-tartrate + H(+) = (R)-glycerate + CO2. The enzyme catalyses (R)-malate + NAD(+) = pyruvate + CO2 + NADH. The protein operates within carbohydrate acid metabolism; tartrate degradation; 2-hydroxy-3-oxosuccinate from L-tartrate: step 1/1. It functions in the pathway carbohydrate acid metabolism; tartrate degradation; 2-hydroxy-3-oxosuccinate from meso-tartrate: step 1/1. Its pathway is carbohydrate acid metabolism; tartrate degradation; D-glycerate from L-tartrate: step 1/1. Functionally, has multiple catalytic activities. Apart from catalyzing the oxidation of (+)-tartrate to oxaloglycolate, also converts meso-tartrate to D-glycerate and catalyzes the oxidative decarboxylation of D-malate to pyruvate. The chain is Tartrate dehydrogenase/decarboxylase from Pseudomonas putida (Arthrobacter siderocapsulatus).